The primary structure comprises 287 residues: Ribosomal RNA small subunit methyltransferase I (287 aa).

The protein belongs to the methyltransferase superfamily. RsmI family.

Its subcellular location is the cytoplasm. It carries out the reaction cytidine(1402) in 16S rRNA + S-adenosyl-L-methionine = 2'-O-methylcytidine(1402) in 16S rRNA + S-adenosyl-L-homocysteine + H(+). In terms of biological role, catalyzes the 2'-O-methylation of the ribose of cytidine 1402 (C1402) in 16S rRNA. In Streptococcus pyogenes serotype M3 (strain ATCC BAA-595 / MGAS315), this protein is Ribosomal RNA small subunit methyltransferase I.